The chain runs to 233 residues: Phosphatidylserine decarboxylase proenzyme (233 aa).

Serine 201 (schiff-base intermediate with substrate; via pyruvic acid) is an active-site residue. Residue serine 201 is modified to Pyruvic acid (Ser); by autocatalysis.

It belongs to the phosphatidylserine decarboxylase family. PSD-A subfamily. In terms of assembly, heterodimer of a large membrane-associated beta subunit and a small pyruvoyl-containing alpha subunit. It depends on pyruvate as a cofactor. Post-translationally, is synthesized initially as an inactive proenzyme. Formation of the active enzyme involves a self-maturation process in which the active site pyruvoyl group is generated from an internal serine residue via an autocatalytic post-translational modification. Two non-identical subunits are generated from the proenzyme in this reaction, and the pyruvate is formed at the N-terminus of the alpha chain, which is derived from the carboxyl end of the proenzyme. The post-translation cleavage follows an unusual pathway, termed non-hydrolytic serinolysis, in which the side chain hydroxyl group of the serine supplies its oxygen atom to form the C-terminus of the beta chain, while the remainder of the serine residue undergoes an oxidative deamination to produce ammonia and the pyruvoyl prosthetic group on the alpha chain.

It localises to the cell membrane. The enzyme catalyses a 1,2-diacyl-sn-glycero-3-phospho-L-serine + H(+) = a 1,2-diacyl-sn-glycero-3-phosphoethanolamine + CO2. Its pathway is phospholipid metabolism; phosphatidylethanolamine biosynthesis; phosphatidylethanolamine from CDP-diacylglycerol: step 2/2. Catalyzes the formation of phosphatidylethanolamine (PtdEtn) from phosphatidylserine (PtdSer). The protein is Phosphatidylserine decarboxylase proenzyme of Mycolicibacterium vanbaalenii (strain DSM 7251 / JCM 13017 / BCRC 16820 / KCTC 9966 / NRRL B-24157 / PYR-1) (Mycobacterium vanbaalenii).